Reading from the N-terminus, the 647-residue chain is Threonine--tRNA ligase (647 aa).

The region spanning 1-61 is the TGS domain; the sequence is MIKITFPDGA…EEDGSIEIVT (61 aa). The catalytic stretch occupies residues 240–538; the sequence is DHRKLGKELD…LIETYKGAFP (299 aa). Residues cysteine 334, histidine 385, and histidine 515 each contribute to the Zn(2+) site.

This sequence belongs to the class-II aminoacyl-tRNA synthetase family. Homodimer. The cofactor is Zn(2+).

It localises to the cytoplasm. The catalysed reaction is tRNA(Thr) + L-threonine + ATP = L-threonyl-tRNA(Thr) + AMP + diphosphate + H(+). Functionally, catalyzes the attachment of threonine to tRNA(Thr) in a two-step reaction: L-threonine is first activated by ATP to form Thr-AMP and then transferred to the acceptor end of tRNA(Thr). Also edits incorrectly charged L-seryl-tRNA(Thr). This chain is Threonine--tRNA ligase, found in Streptococcus pyogenes serotype M49 (strain NZ131).